A 367-amino-acid chain; its full sequence is dTDP-4-amino-4,6-dideoxy-D-glucose transaminase (367 aa).

Position 184 is an N6-(pyridoxal phosphate)lysine (lysine 184).

Belongs to the DegT/DnrJ/EryC1 family. The cofactor is pyridoxal 5'-phosphate.

The enzyme catalyses dTDP-4-amino-4,6-dideoxy-D-glucose + 2-oxoglutarate = dTDP-4-dehydro-6-deoxy-alpha-D-glucose + L-glutamate. It functions in the pathway bacterial outer membrane biogenesis; lipopolysaccharide biosynthesis. Its function is as follows. Catalyzes the conversion of dTDP-4-dehydro-6-deoxy-D-glucose (dTDP-D-Glc4O) to dTDP-4-amino-4,6-dideoxy-D-glucose (dTDP-D-Qui4N). L-glutamine can also be used as amino donor. This is dTDP-4-amino-4,6-dideoxy-D-glucose transaminase (vioA) from Shigella dysenteriae.